The primary structure comprises 218 residues: Thyroid hormone receptor alpha (218 aa).

The 215-residue stretch at 1–215 folds into the NR LBD domain; sequence PEDIGQSPGV…PPLFLEVFED (215 aa). 2 residues coordinate 3,3',5-triiodo-L-thyronine: arginine 36 and serine 85.

It belongs to the nuclear hormone receptor family. NR1 subfamily.

It is found in the nucleus. Its function is as follows. Nuclear hormone receptor that can act as a repressor or activator of transcription. High affinity receptor for thyroid hormones, including triiodothyronine and thyroxine. In Oncorhynchus mykiss (Rainbow trout), this protein is Thyroid hormone receptor alpha (thra).